Reading from the N-terminus, the 50-residue chain is Conotoxin Cal6.19 (50 aa).

The signal sequence occupies residues 1 to 22 (MKVTCVLVLTLMALTVCQVATA). 3 disulfides stabilise this stretch: cysteine 24/cysteine 37, cysteine 30/cysteine 41, and cysteine 36/cysteine 46.

Expressed by the venom duct.

Its subcellular location is the secreted. Its function is as follows. Probable neurotoxin. The protein is Conotoxin Cal6.19 of Californiconus californicus (California cone).